The primary structure comprises 118 residues: Sporulation protein YjcA (118 aa).

Helical transmembrane passes span 8 to 28 (IVLLSLAVFRLARLLVFDTIM), 62 to 82 (FIGELLSCYWCTGVWCAGFLI), and 92 to 112 (AQWLILLLAIAGLAGIIETLV).

It belongs to the UPF0713 family.

It is found in the cell membrane. Its function is as follows. Involved in sporulation. The chain is Sporulation protein YjcA (yjcA) from Bacillus subtilis (strain 168).